We begin with the raw amino-acid sequence, 512 residues long: UDP-N-acetylglucosamine--peptide N-acetylglucosaminyltransferase GtfA subunit (512 aa).

Glycine 16–tyrosine 19 provides a ligand contact to UDP. Histidine 251 provides a ligand contact to N-acetyl-D-glucosamine. Residues glutamine 393–histidine 394 and glutamate 413–glycine 416 each bind UDP.

The protein belongs to the glycosyltransferase group 1 family. Glycosyltransferase 4 subfamily. In terms of assembly, forms a heterotetramer with 2 subunits each of GtfA and GtfB. Part of the accessory SecA2/SecY2 protein translocation apparatus.

Its subcellular location is the cytoplasm. The protein resides in the cell membrane. The catalysed reaction is L-seryl-[protein] + UDP-N-acetyl-alpha-D-glucosamine = 3-O-[N-acetyl-alpha-D-glucosaminyl]-L-seryl-[protein] + UDP + H(+). It functions in the pathway protein modification; protein glycosylation. Functionally, required for polymorphic O-glycosylation of the serine-rich repeat protein (SRRP) in this bacteria. Catalyzes the first step in glycosylation by transferring N-acetylglucosamine from UDP-GlcNAc to serine residues in the substrate protein. Part of the accessory SecA2/SecY2 system specifically required to export serine-rich repeat cell wall proteins encoded in the same operon. The GtfA-GtfB complex adds GlcNAc from UDP-GlcNAc to SRRP (experimentally characterized with a truncated SSR1 construct); the alpha linkage was shown for this enzyme but not the residues glycosylated on SRRP. This Limosilactobacillus reuteri subsp. suis (strain ATCC 53608 / LMG 31752 / 1063) (Lactobacillus reuteri) protein is UDP-N-acetylglucosamine--peptide N-acetylglucosaminyltransferase GtfA subunit.